A 111-amino-acid chain; its full sequence is MDLENTENVENNNNNEEEVKAKGERKAHFNKELNEKDGRKKFFKKKVCYFCKNNIDVLDYKDIKLLKRYVKDSGKIIPKRLNGTCSKHQRLVTKAIKRARNIALLPYETRY.

Positions 1–32 are disordered; it reads MDLENTENVENNNNNEEEVKAKGERKAHFNKE. Residues 17 to 32 are compositionally biased toward basic and acidic residues; sequence EEVKAKGERKAHFNKE.

It belongs to the bacterial ribosomal protein bS18 family. As to quaternary structure, part of the 30S ribosomal subunit. Forms a tight heterodimer with protein bS6.

Binds as a heterodimer with protein bS6 to the central domain of the 16S rRNA, where it helps stabilize the platform of the 30S subunit. In Brachyspira hyodysenteriae (strain ATCC 49526 / WA1), this protein is Small ribosomal subunit protein bS18.